The primary structure comprises 264 residues: Low molecular mass lipoprotein PBMHP-12 (264 aa).

A signal peptide spans 1-16; it reads MKLLVVFAMCVPAASA.

The protein belongs to the 30 kDa lipoprotein family.

Its subcellular location is the secreted. This is Low molecular mass lipoprotein PBMHP-12 from Bombyx mori (Silk moth).